We begin with the raw amino-acid sequence, 713 residues long: Catalase-peroxidase (713 aa).

Positions 77 to 200 form a cross-link, tryptophyl-tyrosyl-methioninium (Trp-Tyr) (with M-226); that stretch reads WHSAGTYRTT…LGATVMGLIY (124 aa). Catalysis depends on H78, which acts as the Proton acceptor. Residues 200–226 constitute a cross-link (tryptophyl-tyrosyl-methioninium (Tyr-Met) (with W-77)); sequence YVNPEGPDGEPDLEGSAANIRESFGRM. H241 provides a ligand contact to heme b.

This sequence belongs to the peroxidase family. Peroxidase/catalase subfamily. In terms of assembly, homodimer or homotetramer. Heme b serves as cofactor. Formation of the three residue Trp-Tyr-Met cross-link is important for the catalase, but not the peroxidase activity of the enzyme.

The enzyme catalyses H2O2 + AH2 = A + 2 H2O. The catalysed reaction is 2 H2O2 = O2 + 2 H2O. Bifunctional enzyme with both catalase and broad-spectrum peroxidase activity. In Natronomonas pharaonis (strain ATCC 35678 / DSM 2160 / CIP 103997 / JCM 8858 / NBRC 14720 / NCIMB 2260 / Gabara) (Halobacterium pharaonis), this protein is Catalase-peroxidase.